A 127-amino-acid polypeptide reads, in one-letter code: Major sperm protein 152 (127 aa).

An N-acetylthreonine modification is found at threonine 2. The MSP domain maps to 9 to 126 (DIQTQPGTKI…RRKNLPIEYN (118 aa)).

Sperm.

The protein resides in the cell projection. It localises to the pseudopodium. The protein localises to the cytoplasm. Its subcellular location is the cytoskeleton. Its function is as follows. Central component in molecular interactions underlying sperm crawling. Forms an extensive filament system that extends from sperm villipoda, along the leading edge of the pseudopod. This is Major sperm protein 152 (msp-152) from Caenorhabditis elegans.